Here is a 319-residue protein sequence, read N- to C-terminus: ATP-dependent 6-phosphofructokinase (319 aa).

Gly11 is a binding site for ATP. 21 to 25 serves as a coordination point for ADP; that stretch reads RAVVR. Residues 72-73 and 102-105 each bind ATP; these read RC and GDGS. Mg(2+) is bound at residue Asp103. 125 to 127 serves as a coordination point for substrate; it reads TID. The active-site Proton acceptor is the Asp127. Arg154 lines the ADP pocket. Substrate-binding positions include Arg162 and 169–171; that span reads MGR. ADP is bound by residues 185–187, Arg211, and 213–215; these read GAE and KKH. Substrate is bound by residues Glu222, Arg243, and 249 to 252; that span reads HVQR.

This sequence belongs to the phosphofructokinase type A (PFKA) family. ATP-dependent PFK group I subfamily. Prokaryotic clade 'B1' sub-subfamily. Homotetramer. Requires Mg(2+) as cofactor.

It is found in the cytoplasm. The enzyme catalyses beta-D-fructose 6-phosphate + ATP = beta-D-fructose 1,6-bisphosphate + ADP + H(+). It functions in the pathway carbohydrate degradation; glycolysis; D-glyceraldehyde 3-phosphate and glycerone phosphate from D-glucose: step 3/4. With respect to regulation, allosterically activated by ADP and other diphosphonucleosides, and allosterically inhibited by phosphoenolpyruvate. Functionally, catalyzes the phosphorylation of D-fructose 6-phosphate to fructose 1,6-bisphosphate by ATP, the first committing step of glycolysis. In Anoxybacillus flavithermus (strain DSM 21510 / WK1), this protein is ATP-dependent 6-phosphofructokinase.